Here is a 140-residue protein sequence, read N- to C-terminus: FAD synthase (140 aa).

Residues Thr-10–Phe-11, His-15–His-18, and Asn-93 contribute to the ATP site.

This sequence belongs to the archaeal FAD synthase family. As to quaternary structure, homodimer. A divalent metal cation is required as a cofactor.

The enzyme catalyses FMN + ATP + H(+) = FAD + diphosphate. The protein operates within cofactor biosynthesis; FAD biosynthesis; FAD from FMN: step 1/1. Functionally, catalyzes the transfer of the AMP portion of ATP to flavin mononucleotide (FMN) to produce flavin adenine dinucleotide (FAD) coenzyme. The polypeptide is FAD synthase (Methanocella arvoryzae (strain DSM 22066 / NBRC 105507 / MRE50)).